The chain runs to 418 residues: MKAEIISVGTEILLGDIVNTNSQFLAKELASLGIEVYHQSTVGDNKQRLLECFDESLKRSDFVITTGGLGPTGDDMTKETAAEYFGQKLELHKPSLEVLESFFVKTGKKMAENNMKQVYFPKDAIVLKNNNGTAPGAILKKDGKFIIVLPGPPREMKAMFNESVKPYLQQFTNEMLVSKTLRLYGIGESNLELEILDIINEQTNPTVALYAKELEVTIRITAKAENEREAFKLIKPVEEKIKSRVGKYVYTEGDISISEGETALEDAVSKLLVEKNLTIAVAESCTGGLVSSSLINYPGISSVFLEGCVTYSNDSKMKRLGVKRETLEEFGAVSEQTAIEMAEGVAKGLKANIGISTTGVAGPGGGTKEKPVGLVYTAIYINGKTIVKKNIFNGDRRKIRLRATRDLLNELRIQLEKL.

Belongs to the CinA family.

The protein is Putative competence-damage inducible protein of Clostridioides difficile (strain 630) (Peptoclostridium difficile).